The sequence spans 141 residues: 3-hydroxyacyl-[acyl-carrier-protein] dehydratase FabZ (141 aa).

The active site involves histidine 48.

The protein belongs to the thioester dehydratase family. FabZ subfamily.

It localises to the cytoplasm. The catalysed reaction is a (3R)-hydroxyacyl-[ACP] = a (2E)-enoyl-[ACP] + H2O. Its function is as follows. Involved in unsaturated fatty acids biosynthesis. Catalyzes the dehydration of short chain beta-hydroxyacyl-ACPs and long chain saturated and unsaturated beta-hydroxyacyl-ACPs. The protein is 3-hydroxyacyl-[acyl-carrier-protein] dehydratase FabZ of Bacillus velezensis (strain DSM 23117 / BGSC 10A6 / LMG 26770 / FZB42) (Bacillus amyloliquefaciens subsp. plantarum).